A 375-amino-acid chain; its full sequence is 23S rRNA (uracil(747)-C(5))-methyltransferase RlmC (375 aa).

4 residues coordinate [4Fe-4S] cluster: Cys-3, Cys-11, Cys-14, and Cys-87. Gln-212, Phe-241, Glu-262, and Asn-307 together coordinate S-adenosyl-L-methionine. Cys-334 acts as the Nucleophile in catalysis.

It belongs to the class I-like SAM-binding methyltransferase superfamily. RNA M5U methyltransferase family. RlmC subfamily.

It carries out the reaction uridine(747) in 23S rRNA + S-adenosyl-L-methionine = 5-methyluridine(747) in 23S rRNA + S-adenosyl-L-homocysteine + H(+). Catalyzes the formation of 5-methyl-uridine at position 747 (m5U747) in 23S rRNA. This is 23S rRNA (uracil(747)-C(5))-methyltransferase RlmC from Escherichia coli O139:H28 (strain E24377A / ETEC).